Reading from the N-terminus, the 105-residue chain is UPF0145 protein Aflv_1588 (105 aa).

This sequence belongs to the UPF0145 family.

This Anoxybacillus flavithermus (strain DSM 21510 / WK1) protein is UPF0145 protein Aflv_1588.